A 30-amino-acid chain; its full sequence is Alpha-defensin PhD-4 (30 aa).

3 disulfides stabilise this stretch: Cys2-Cys30, Cys4-Cys19, and Cys9-Cys29.

It localises to the secreted. In terms of biological role, in low salt conditions, has antibacterial activity against the Gram-negative bacterium E.coli ML35p (MIC=2.4 uM), the Gram-positive bacteria L.monocytogenes EGD (MIC=2.2 uM) and methicillin-resistant S.aureus ATCC 33591 (MIC=3.5 uM), and the fungus C.albicans 820 (MIC=3.9 uM). At high physiological salt concentrations the antimicrobial activity decreases significantly: E.coli ML35p (MIC=7.1 uM), L.monocytogenes EGD (MIC=1.8 uM), S.aureus ATCC 33591 (MIC=&gt;50 uM), and C.albicans 820 (MIC=&gt;50 uM). The sequence is that of Alpha-defensin PhD-4 from Papio hamadryas (Hamadryas baboon).